Here is a 799-residue protein sequence, read N- to C-terminus: Protein scabrous (799 aa).

The signal sequence occupies residues 1–51 (MRDWQTFPDLQKKKVSRDHLNCPATMAGSNVLWPILLAVVLLQISVAFVSG). The segment at 287 to 316 (TRKDGSSASVEEESGSQEANQEQTGLETTA) is disordered. Asparagine 372 carries an N-linked (GlcNAc...) asparagine glycan. Over residues 489-498 (LNKPHKRPHH) the composition is skewed to basic residues. The segment at 489 to 509 (LNKPHKRPHHQNVQAQMPQDD) is disordered. In terms of domain architecture, Fibrinogen C-terminal spans 533–737 (AIINKLPHDC…SSRMLVKRLP (205 aa)). A disulfide bridge connects residues cysteine 542 and cysteine 568. 3 N-linked (GlcNAc...) asparagine glycosylation sites follow: asparagine 587, asparagine 618, and asparagine 660. A disulfide bridge links cysteine 687 with cysteine 700. Residues asparagine 744 and asparagine 787 are each glycosylated (N-linked (GlcNAc...) asparagine).

Possesses five pairs of dibasic residues that may be the target of proteolytic processing.

Its subcellular location is the late endosome. Functionally, involved in regulation of neurogenesis. May encode a lateral inhibitor of R8 differentiation. In conjunction with Gp150, promotes Notch activation in response to Delta by regulating acquisition of insensitivity to Delta in a subset of cells. The sequence is that of Protein scabrous (sca) from Drosophila melanogaster (Fruit fly).